The following is a 163-amino-acid chain: UPF0134 protein MPN_139 (163 aa).

The protein belongs to the UPF0134 family.

The polypeptide is UPF0134 protein MPN_139 (Mycoplasma pneumoniae (strain ATCC 29342 / M129 / Subtype 1) (Mycoplasmoides pneumoniae)).